Consider the following 515-residue polypeptide: Slowpoke-binding protein (515 aa).

A disordered region spans residues Met1–Val31. Residues Ala7–Val20 show a composition bias toward polar residues. 2 positions are modified to phosphoserine: Ser54 and Ser79. The segment covering Ser73 to Gln82 has biased composition (polar residues). The segment at Ser73–Ser94 is disordered. Positions Asn191 to Asp203 are interaction with Slo. Residues Ser483–Gly503 are disordered.

In terms of assembly, interacts specifically with Slo; which activates Slo activity. Interacts with 14-3-3-zeta when phosphorylated. Forms a heterotetrameric complex containing phosphorylated Slob, Slo and 14-3-3-zeta, which represses Slo activity due to the indirect interaction between Slo and 14-3-3-zeta. In terms of processing, phosphorylated. Phosphorylation of Ser-54 and Ser-79 is required for the interaction with 14-3-3-zeta but not with that of Slo. Expressed in head. In larval brain, it is expressed in the mushroom body. Also expressed in larval muscles.

It is found in the cytoplasm. In terms of biological role, regulator of calcium-activated channel Slo. Increases or decreases the voltage sensitivity of Slo, depending on the absence or presence of 14-3-3-zeta in the complex, respectively. This chain is Slowpoke-binding protein (Slob), found in Drosophila melanogaster (Fruit fly).